Here is a 58-residue protein sequence, read N- to C-terminus: Small ribosomal subunit protein bS21 (58 aa).

The disordered stretch occupies residues 24–58 (TKAGTLQEARKREHYEKPSVKRKRKSEAARKRKKI). Basic and acidic residues predominate over residues 31-42 (EARKREHYEKPS). Over residues 43-58 (VKRKRKSEAARKRKKI) the composition is skewed to basic residues.

The protein belongs to the bacterial ribosomal protein bS21 family.

The protein is Small ribosomal subunit protein bS21 of Streptococcus thermophilus (strain CNRZ 1066).